We begin with the raw amino-acid sequence, 200 residues long: Cation channel sperm-associated auxiliary subunit zeta (200 aa).

A compositionally biased stretch (basic and acidic residues) spans 1-29 (MEEKPSKVSLKSSDRQGSDEESVHSDTRD). 2 disordered regions span residues 1-31 (MEEK…RDLW) and 58-78 (NISK…EGYK).

In terms of assembly, component of the CatSper complex or CatSpermasome composed of the core pore-forming members CATSPER1, CATSPER2, CATSPER3 and CATSPER4 as well as auxiliary members CATSPERB, CATSPERG, CATSPERD, CATSPERE, CATSPERZ, C2CD6/CATSPERT, TMEM249, TMEM262 and EFCAB9. HSPA1 may be an additional auxiliary complex member. The core complex members CATSPER1, CATSPER2, CATSPER3 and CATSPER4 form a heterotetrameric channel. The auxiliary CATSPERB, CATSPERG, CATSPERD and CATSPERE subunits form a pavilion-like structure over the pore which stabilizes the complex through interactions with CATSPER4, CATSPER3, CATSPER1 and CATSPER2 respectively. TMEM262/CATSPERH interacts with CATSPERB, further stabilizing the complex. C2CD6/CATSPERT interacts at least with CATSPERD and is required for targeting the CatSper complex in the flagellar membrane. Interacts with EFCAB9; the interaction is direct, Ca(2+)-dependent and connects EFCAB9 with the CatSper complex. Dissociates from EFCAB9 at elevated pH.

It is found in the cell projection. It localises to the cilium. Its subcellular location is the flagellum membrane. Its function is as follows. Auxiliary component of the CatSper complex, a complex involved in sperm cell hyperactivation. Sperm cell hyperactivation is needed for sperm motility which is essential late in the preparation of sperm for fertilization. Required for a distribution of the CatSper complex in linear quadrilateral nanodomains along the flagellum, maximizing fertilization inside the mammalian female reproductive tract. Together with EFCAB9, associates with the CatSper channel pore and is required for the two-row structure of each single CatSper channel. This is Cation channel sperm-associated auxiliary subunit zeta from Homo sapiens (Human).